Consider the following 166-residue polypeptide: P2Y purinoceptor 2 (166 aa).

The Cytoplasmic portion of the chain corresponds to 1–24; it reads VHRCLGVLRPLHSLRWGRARYARR. Residues 25 to 45 traverse the membrane as a helical segment; it reads VAAVVWVLVLACQAPVLYFVT. The Extracellular portion of the chain corresponds to 46–72; sequence TSVRGTRITCHDTSARELFSHFVAYSS. Residues 73 to 93 form a helical membrane-spanning segment; it reads VMLSLLFAVPFSVILVCYVLM. Topologically, residues 94–115 are cytoplasmic; that stretch reads ARRLLKPAYGTTGGLPRAKRKS. The helical transmembrane segment at 116 to 136 threads the bilayer; that stretch reads VRTIALVLAVFTLCFLPFHVT. At 137–159 the chain is on the extracellular side; the sequence is RTLYYSFRSLDLSCHTLNAINMA. Residues 160–166 form a helical membrane-spanning segment; that stretch reads YKITRPL.

Belongs to the G-protein coupled receptor 1 family.

The protein resides in the cell membrane. In terms of biological role, receptor for ATP and UTP coupled to G-proteins that activate a phosphatidylinositol-calcium second messenger system. This Cricetulus griseus (Chinese hamster) protein is P2Y purinoceptor 2 (P2RY2).